A 487-amino-acid polypeptide reads, in one-letter code: 3-ketoacyl-CoA synthase 17 (487 aa).

2 consecutive transmembrane segments (helical) span residues 23–43 (LITH…FMNV) and 57–77 (STGF…FFMS). In terms of domain architecture, FAE spans 74–363 (FFMSRPRSIY…FFATFVAKRL (290 aa)). Active-site residues include Cys-218, His-297, His-382, His-386, His-415, and Asn-419.

The protein belongs to the thiolase-like superfamily. Chalcone/stilbene synthases family. In terms of tissue distribution, expressed in flowers.

It localises to the membrane. It carries out the reaction a very-long-chain acyl-CoA + malonyl-CoA + H(+) = a very-long-chain 3-oxoacyl-CoA + CO2 + CoA. It functions in the pathway lipid metabolism; fatty acid biosynthesis. Its activity is regulated as follows. Inhibited by K3 herbicides such as alachlor, allidochlor, anilofos, cafenstrole, fentrazamide and flufenacet. Strongly inhibited by metazachlor. Functionally, active on saturated acyl-CoAs up to C22. Mediates the synthesis of VLCFAs from 20 to 26 carbons in length (e.g. C20:1, C20, C24, C26). This Arabidopsis thaliana (Mouse-ear cress) protein is 3-ketoacyl-CoA synthase 17.